We begin with the raw amino-acid sequence, 292 residues long: Formamidopyrimidine-DNA glycosylase (292 aa).

The active-site Schiff-base intermediate with DNA is Pro-2. Catalysis depends on Glu-3, which acts as the Proton donor. Lys-58 (proton donor; for beta-elimination activity) is an active-site residue. Residues His-103, Arg-122, and Lys-165 each coordinate DNA. Residues Arg-256–Lys-292 form an FPG-type zinc finger. Arg-282 serves as the catalytic Proton donor; for delta-elimination activity.

This sequence belongs to the FPG family. Monomer. Zn(2+) serves as cofactor.

The enzyme catalyses Hydrolysis of DNA containing ring-opened 7-methylguanine residues, releasing 2,6-diamino-4-hydroxy-5-(N-methyl)formamidopyrimidine.. It carries out the reaction 2'-deoxyribonucleotide-(2'-deoxyribose 5'-phosphate)-2'-deoxyribonucleotide-DNA = a 3'-end 2'-deoxyribonucleotide-(2,3-dehydro-2,3-deoxyribose 5'-phosphate)-DNA + a 5'-end 5'-phospho-2'-deoxyribonucleoside-DNA + H(+). Involved in base excision repair of DNA damaged by oxidation or by mutagenic agents. Acts as a DNA glycosylase that recognizes and removes damaged bases. Has a preference for oxidized purines, such as 7,8-dihydro-8-oxoguanine (8-oxoG). Has AP (apurinic/apyrimidinic) lyase activity and introduces nicks in the DNA strand. Cleaves the DNA backbone by beta-delta elimination to generate a single-strand break at the site of the removed base with both 3'- and 5'-phosphates. The chain is Formamidopyrimidine-DNA glycosylase from Methylocella silvestris (strain DSM 15510 / CIP 108128 / LMG 27833 / NCIMB 13906 / BL2).